The chain runs to 154 residues: UPF0756 membrane protein CKR_1028 (154 aa).

4 consecutive transmembrane segments (helical) span residues 5–25 (IILI…VALA), 48–68 (NGLF…IADG), 82–102 (WLGI…GLGM), and 113–133 (IMPA…GVPV).

Belongs to the UPF0756 family.

Its subcellular location is the cell membrane. This is UPF0756 membrane protein CKR_1028 from Clostridium kluyveri (strain NBRC 12016).